We begin with the raw amino-acid sequence, 232 residues long: Large ribosomal subunit protein uL1 (232 aa).

This sequence belongs to the universal ribosomal protein uL1 family. Part of the 50S ribosomal subunit.

In terms of biological role, binds directly to 23S rRNA. The L1 stalk is quite mobile in the ribosome, and is involved in E site tRNA release. Its function is as follows. Protein L1 is also a translational repressor protein, it controls the translation of the L11 operon by binding to its mRNA. The sequence is that of Large ribosomal subunit protein uL1 from Bacteroides fragilis (strain ATCC 25285 / DSM 2151 / CCUG 4856 / JCM 11019 / LMG 10263 / NCTC 9343 / Onslow / VPI 2553 / EN-2).